An 853-amino-acid polypeptide reads, in one-letter code: Aryl hydrocarbon receptor (853 aa).

Residues 1–9 constitute a propeptide that is removed on maturation; sequence MSSGANITY. The interval 1 to 38 is disordered; it reads MSSGANITYASRKRRKPVQKTVKPVPAEGIKSNPSKRH. 2 short sequence motifs (nuclear localization signal) span residues 12–15 and 36–41; these read RKRR and KRHRDR. In terms of domain architecture, bHLH spans 26 to 79; that stretch reads PAEGIKSNPSKRHRDRLNTELDRLASLLPFPQDVINKLDKLSVLRLSVSYLRAK. The interval 37-65 is DNA-binding; that stretch reads RHRDRLNTELDRLASLLPFPQDVINKLDK. 3 required for maintaining the overall integrity of the AHR:ARNT heterodimer and its transcriptional activity regions span residues 49-81, 116-124, and 264-266; these read LASL…AKSF, LLQALNGFV, and FAI. The Nuclear export signal signature appears at 63–71; the sequence is LDKLSVLRL. The PAS 1 domain maps to 116–179; it reads LLQALNGFVL…RQLHWALNPS (64 aa). Residues 273–340 enclose the PAS 2 domain; it reads PSILEIRTKN…CAESHIRMIK (68 aa). The PAC domain maps to 346-384; that stretch reads MTVFRLLAKHSRWRWVQSNARLIYRNGRPDYIIATQRPL. The segment at 429 to 451 is disordered; that stretch reads TKSNTSRKDWAPQSTPSKDSFHP. Over residues 440 to 451 the composition is skewed to polar residues; it reads PQSTPSKDSFHP.

In terms of assembly, homodimer. Heterodimer; efficient DNA binding requires dimerization with another bHLH protein. Interacts with ARNT; the heterodimer ARNT:AHR binds to core DNA sequence 5'-TGCGTG-3' within the dioxin response element (DRE) of target gene promoters and activates their transcription. Binds MYBBP1A. Interacts with coactivators including SRC-1, RIP140 and NOCA7, and with the corepressor SMRT. Interacts with NEDD8 and IVNS1ABP. Interacts with BMAL1. Interacts with HSP90AB1. Interacts with TIPARP; leading to mono-ADP-ribosylation of AHR and subsequent inhibition of AHR. Post-translationally, mono-ADP-ribosylated, leading to inhibit transcription activator activity of AHR. In terms of tissue distribution, expressed in all tissues tested including brain, heart, kidney, liver, lung, spleen, skeletal muscle and thymus.

It is found in the cytoplasm. It localises to the nucleus. Ligand-activated transcription factor that enables cells to adapt to changing conditions by sensing compounds from the environment, diet, microbiome and cellular metabolism, and which plays important roles in development, immunity and cancer. Upon ligand binding, translocates into the nucleus, where it heterodimerizes with ARNT and induces transcription by binding to xenobiotic response elements (XRE). Regulates a variety of biological processes, including angiogenesis, hematopoiesis, drug and lipid metabolism, cell motility and immune modulation. Xenobiotics can act as ligands: upon xenobiotic-binding, activates the expression of multiple phase I and II xenobiotic chemical metabolizing enzyme genes (such as the CYP1A1 gene). Mediates biochemical and toxic effects of halogenated aromatic hydrocarbons. Next to xenobiotics, natural ligands derived from plants, microbiota, and endogenous metabolism are potent AHR agonists. Tryptophan (Trp) derivatives constitute an important class of endogenous AHR ligands. Acts as a negative regulator of anti-tumor immunity: indoles and kynurenic acid generated by Trp catabolism act as ligand and activate AHR, thereby promoting AHR-driven cancer cell motility and suppressing adaptive immunity. Regulates the circadian clock by inhibiting the basal and circadian expression of the core circadian component PER1. Inhibits PER1 by repressing the CLOCK-BMAL1 heterodimer mediated transcriptional activation of PER1. The heterodimer ARNT:AHR binds to core DNA sequence 5'-TGCGTG-3' within the dioxin response element (DRE) of target gene promoters and activates their transcription. The protein is Aryl hydrocarbon receptor (Ahr) of Rattus norvegicus (Rat).